The primary structure comprises 212 residues: Large ribosomal subunit protein bL25 (212 aa).

The tract at residues 179–212 is disordered; that stretch reads EPEEEELPEDDEAAAEGEDAAAGEEAEAPAESED.

This sequence belongs to the bacterial ribosomal protein bL25 family. CTC subfamily. Part of the 50S ribosomal subunit; part of the 5S rRNA/L5/L18/L25 subcomplex. Contacts the 5S rRNA. Binds to the 5S rRNA independently of L5 and L18.

This is one of the proteins that binds to the 5S RNA in the ribosome where it forms part of the central protuberance. The sequence is that of Large ribosomal subunit protein bL25 from Corynebacterium urealyticum (strain ATCC 43042 / DSM 7109).